Here is a 182-residue protein sequence, read N- to C-terminus: Triplatin (182 aa).

A signal peptide spans 1–18; that stretch reads MKMIIAVTFLGIVTIAFA. Intrachain disulfides connect Cys-21/Cys-133, Cys-55/Cys-177, and Cys-88/Cys-105.

It belongs to the calycin superfamily. Triabin family. Expressed in salivary glands.

Its subcellular location is the secreted. In terms of biological role, inhibits platelet aggregation and vasoconstriction through binding to distinct eicosanoids involved in inflammation (acts as a scavenger), and has a role in inhibiting host innate immunity by impairing platelet-assisted formation of neutrophil extracellular traps (NETs). Inhibits platelet aggregation by collagen, and low doses of thromboxane A2 mimetic (TXA2 mimetic), and arachidonic acid (AA) without affecting aggregation induced by ADP, convulxin (GP6 agonist), and PMA. Binds to TXA2, TXB2, prostaglandine H2 mimetic (PGH2 mimetic), PGJ2, and PGF2alpha. Binding is not observed to leukotrienes, AA, and biogenic amines (PGE1, 5(S)-HETE, 12(S)-HETE, 20-HETE, norepinephrine, epinephrine, serotonin, LTC4 and ADP). Induces relaxation of aorta rat previously contracted with TXA2 mimetic. Moreover, it also impairs platelet-assisted formation of neutrophil extracellular traps (NETs). NETs are web-like structures of DNA and proteins that play an important role in killing of pathogens. In addition, NETs are implicated in thrombus formation. In vivo, this protein exhibits antithrombotic activity in two distinct mice models that are highly dependent on platelets. It is noteworthy that it inhibits thrombosis without promoting excessive bleeding. The protein is Triplatin of Triatoma infestans (Assassin bug).